The chain runs to 329 residues: Olfactory receptor 52L1 (329 aa).

The Extracellular portion of the chain corresponds to 1–43; sequence MTLVSFFSFLSKPLIMLLSNSSWRLSQPSFLLVGIPGLEESQH. N20 carries N-linked (GlcNAc...) asparagine glycosylation. A helical transmembrane segment spans residues 44–64; it reads WIALPLGILYLLALVGNVTIL. Residues 65–72 are Cytoplasmic-facing; sequence FIIWMDPS. The helical transmembrane segment at 73–93 threads the bilayer; sequence LHQSMYLFLSMLAAIDLVLAS. Residues 94–117 are Extracellular-facing; sequence STAPKALAVLLVHAHEIGYIVCLI. C115 and C207 are oxidised to a cystine. Residues 118–138 traverse the membrane as a helical segment; the sequence is QMFFIHAFSSMESGVLVAMAL. The Cytoplasmic segment spans residues 139–157; the sequence is DRYVAICHPLHHSTILHPG. Residues 158-178 traverse the membrane as a helical segment; sequence VIGRIGMVVLVRGLLLLIPFP. Residues 179–214 are Extracellular-facing; sequence ILLGTLIFCQATIIGHAYCEHMAVVKLACSETTVNR. A helical membrane pass occupies residues 215-235; the sequence is AYGLTMALLVIGLDVLAIGVS. Topologically, residues 236–255 are cytoplasmic; sequence YAHILQAVLKVPGSEARLKA. The helical transmembrane segment at 256–276 threads the bilayer; it reads FSTCGSHICVILVFYVPGIFS. Residues 277 to 291 are Extracellular-facing; it reads FLTHRFGHHVPHHVH. Residues 292-312 traverse the membrane as a helical segment; the sequence is VLLATRYLLMPPALNPLVYGV. The Cytoplasmic segment spans residues 313 to 329; sequence KTQQIRQRVLRVFTQKD.

This sequence belongs to the G-protein coupled receptor 1 family.

It is found in the cell membrane. Functionally, odorant receptor. This Homo sapiens (Human) protein is Olfactory receptor 52L1 (OR52L1).